Consider the following 679-residue polypeptide: Altered inheritance of mitochondria protein 21 (679 aa).

Positions 1 to 85 (MPSEVTPKVP…LQRPVRRSTT (85 aa)) are disordered. The span at 9-19 (VPERPSRRKTS) shows a compositional bias: basic and acidic residues. Thr-18 bears the Phosphothreonine mark. A Phosphoserine modification is found at Ser-36. Thr-58 bears the Phosphothreonine mark. Ser-70 is modified (phosphoserine). Position 85 is a phosphothreonine (Thr-85). At Ser-104 the chain carries Phosphoserine. Residues 110–119 (NIHNVSRKKS) are compositionally biased toward basic residues. Disordered stretches follow at residues 110–522 (NIHN…EKIE), 549–580 (IDTT…PNKM), and 593–679 (EKLP…FHSL). Polar residues-rich tracts occupy residues 133–149 (QNGQ…TNPS) and 164–178 (SAIS…SNNE). Positions 179–213 (VTEHSDSEDLTEKQKVHAALDNEAGDRSHFEEKLI) are enriched in basic and acidic residues. 3 positions are modified to phosphoserine: Ser-183, Ser-206, and Ser-231. A compositionally biased stretch (basic and acidic residues) spans 243-272 (SDDKAEKFTKHPESSLEELQKHQEQQEEKI). Phosphothreonine is present on Thr-277. Ser-284 is modified (phosphoserine). Residues 296-323 (EVNSQPQGPSDTETVIAATSSNVPSQIA) are compositionally biased toward polar residues. A Phosphoserine modification is found at Ser-324. Composition is skewed to basic and acidic residues over residues 339 to 361 (KKDF…RVSE) and 372 to 383 (EESKIPKIPSER). The tract at residues 383–396 (RPKRRAPPPVPKKP) is interaction with SH3 domain of ABP1. Composition is skewed to polar residues over residues 414–427 (DLHN…TTAS) and 437–452 (SSIT…TSKL). Residues 471-482 (LEKKLSSPDTES) are compositionally biased toward basic and acidic residues. Residues 501–512 (RRGRGPRGRKLP) are compositionally biased toward basic residues. Phosphothreonine is present on Thr-552. A compositionally biased stretch (basic and acidic residues) spans 556-576 (QAERALDEKSKSIPEEQREQS). At Ser-576 the chain carries Phosphoserine. Residues 603-613 (PLSQLPQTNAV) show a composition bias toward polar residues. A phosphoserine mark is found at Ser-620, Ser-623, Ser-625, Ser-627, Ser-667, Ser-671, Ser-675, and Ser-678. The span at 667 to 679 (SALHSEEASFHSL) shows a compositional bias: basic and acidic residues.

This sequence belongs to the AIM21 family. As to quaternary structure, interacts with ribosomes. Interacts with ABP1.

Its subcellular location is the cytoplasm. The protein localises to the cytoskeleton. It localises to the actin patch. In terms of biological role, involved in mitochondrial migration along actin filaments. The protein is Altered inheritance of mitochondria protein 21 (AIM21) of Saccharomyces cerevisiae (strain ATCC 204508 / S288c) (Baker's yeast).